Here is a 187-residue protein sequence, read N- to C-terminus: Elongation factor P (187 aa).

Belongs to the elongation factor P family.

It localises to the cytoplasm. It functions in the pathway protein biosynthesis; polypeptide chain elongation. Its function is as follows. Involved in peptide bond synthesis. Stimulates efficient translation and peptide-bond synthesis on native or reconstituted 70S ribosomes in vitro. Probably functions indirectly by altering the affinity of the ribosome for aminoacyl-tRNA, thus increasing their reactivity as acceptors for peptidyl transferase. This Corynebacterium diphtheriae (strain ATCC 700971 / NCTC 13129 / Biotype gravis) protein is Elongation factor P.